The following is a 264-amino-acid chain: MRVVRPEFRPAPGLDTDAMASRQRDIAAVADFADDHGLTPERIGLDEPPGEQAALGGATTSGEAAPVVVGVDQAFRDDEVSVSAAVAIRDGAVIERAAGNAPLDVPYVPGLLAFREGSAVIDALSSLSVEPDLLVVDGSGRIHYRQAGLATHVGVLFDVPAVGVAKSLLCGTPAAALADPLPAGTRVAIEADDSMDAPDGAVVGYALQSRQYPTPETRHINPLYVSPGHRVSAGTAADLVEATCTQYKLPAPTRLADQYAADLT.

Residues aspartate 72 and aspartate 137 each coordinate Mg(2+).

It belongs to the endonuclease V family. The cofactor is Mg(2+).

It localises to the cytoplasm. The catalysed reaction is Endonucleolytic cleavage at apurinic or apyrimidinic sites to products with a 5'-phosphate.. In terms of biological role, DNA repair enzyme involved in the repair of deaminated bases. Selectively cleaves double-stranded DNA at the second phosphodiester bond 3' to a deoxyinosine leaving behind the intact lesion on the nicked DNA. The polypeptide is Endonuclease V (Halobacterium salinarum (strain ATCC 700922 / JCM 11081 / NRC-1) (Halobacterium halobium)).